The sequence spans 331 residues: UPF0194 membrane protein YbhG (331 aa).

The N-terminal stretch at 1-15 (MKKPVVIGLAVVVLA) is a signal peptide. The stretch at 107-208 (EEIAQAAAAV…LNLQDSTLIA (102 aa)) forms a coiled coil.

Belongs to the UPF0194 family.

Its subcellular location is the periplasm. The protein is UPF0194 membrane protein YbhG of Escherichia coli O157:H7 (strain EC4115 / EHEC).